A 291-amino-acid chain; its full sequence is N-acetylmannosamine kinase (291 aa).

ATP is bound by residues 5 to 12 and 132 to 139; these read AIDIGGTK and GVGGGVVS. 4 residues coordinate Zn(2+): His-156, Cys-166, Cys-168, and Cys-173.

The protein belongs to the ROK (NagC/XylR) family. NanK subfamily. As to quaternary structure, homodimer.

It catalyses the reaction an N-acyl-D-mannosamine + ATP = an N-acyl-D-mannosamine 6-phosphate + ADP + H(+). It functions in the pathway amino-sugar metabolism; N-acetylneuraminate degradation; D-fructose 6-phosphate from N-acetylneuraminate: step 2/5. In terms of biological role, catalyzes the phosphorylation of N-acetylmannosamine (ManNAc) to ManNAc-6-P. The chain is N-acetylmannosamine kinase from Shigella boydii serotype 18 (strain CDC 3083-94 / BS512).